We begin with the raw amino-acid sequence, 760 residues long: ER membrane protein complex subunit 1 (760 aa).

The signal sequence occupies residues 1-24; it reads MKITCTDLVYVFILLFLNTSCVQA. The Lumenal segment spans residues 25-723; the sequence is VFSDDAFITD…PSGQFDLMSP (699 aa). 8 N-linked (GlcNAc...) asparagine glycosylation sites follow: Asn73, Asn106, Asn192, Asn202, Asn420, Asn443, Asn574, and Asn578. The chain crosses the membrane as a helical span at residues 724–744; it reads TFEKGKLLITIFVLLVITYFI. Topologically, residues 745–760 are cytoplasmic; the sequence is RPSVSNKKLKSQWLIK.

Belongs to the EMC1 family. In terms of assembly, component of the ER membrane protein complex (EMC), which is composed of EMC1, EMC2, EMC3, EMC4, EMC5 and EMC6. Post-translationally, N-glycosylated.

The protein resides in the endoplasmic reticulum membrane. In terms of biological role, part of the endoplasmic reticulum membrane protein complex (EMC) that enables the energy-independent insertion into endoplasmic reticulum membranes of newly synthesized membrane proteins. Preferentially accommodates proteins with transmembrane domains that are weakly hydrophobic or contain destabilizing features such as charged and aromatic residues. Involved in the cotranslational insertion of multi-pass membrane proteins in which stop-transfer membrane-anchor sequences become ER membrane spanning helices. It is also required for the post-translational insertion of tail-anchored/TA proteins in endoplasmic reticulum membranes. By mediating the proper cotranslational insertion of N-terminal transmembrane domains in an N-exo topology, with translocated N-terminus in the lumen of the ER, controls the topology of multi-pass membrane proteins. The chain is ER membrane protein complex subunit 1 (EMC1) from Saccharomyces cerevisiae (strain ATCC 204508 / S288c) (Baker's yeast).